The sequence spans 554 residues: Sesquiterpene synthase 14b (554 aa).

4 residues coordinate Mg(2+): Asp305, Asp309, Asp449, and Glu457. The short motif at Asp305–Asp309 is the DDXXD motif element.

It belongs to the terpene synthase family. Tpsa subfamily. Requires Mg(2+) as cofactor. Mn(2+) serves as cofactor.

The enzyme catalyses (2E,6E)-farnesyl diphosphate = (E)-gamma-bisabolene + diphosphate. The catalysed reaction is (2Z,6Z)-farnesyl diphosphate = (E)-gamma-bisabolene + diphosphate. It carries out the reaction (2Z,6Z)-farnesyl diphosphate = (E)-alpha-bisabolene + diphosphate. It catalyses the reaction (2Z,6Z)-farnesyl diphosphate = (Z)-beta-farnesene + diphosphate. The enzyme catalyses (2E,6E)-farnesyl diphosphate = (E)-beta-farnesene + diphosphate. The catalysed reaction is (2E,6E)-farnesyl diphosphate = (+)-thujopsene + diphosphate. It carries out the reaction (2Z,6Z)-farnesyl diphosphate = (E)-beta-farnesene + diphosphate. It catalyses the reaction (2E,6E)-farnesyl diphosphate = (Z)-beta-farnesene + diphosphate. The enzyme catalyses (2Z,6Z)-farnesyl diphosphate = beta-acoradiene + diphosphate. The catalysed reaction is (2Z,6Z)-farnesyl diphosphate = alpha-acoradiene + diphosphate. It carries out the reaction (2Z,6Z)-farnesyl diphosphate = beta-bisabolene + diphosphate. It catalyses the reaction (2E,6E)-farnesyl diphosphate = (-)-alpha-cedrene + diphosphate. The enzyme catalyses (2E,6E)-farnesyl diphosphate = beta-bisabolene + diphosphate. The catalysed reaction is (2E,6E)-farnesyl diphosphate = beta-acoradiene + diphosphate. It carries out the reaction (2Z,6Z)-farnesyl diphosphate = (-)-alpha-cedrene + diphosphate. It catalyses the reaction (2E)-geranyl diphosphate = terpinolene + diphosphate. The enzyme catalyses (2E)-geranyl diphosphate = limonene + diphosphate. The catalysed reaction is (2E)-geranyl diphosphate = beta-myrcene + diphosphate. Its pathway is secondary metabolite biosynthesis; terpenoid biosynthesis. In terms of biological role, sesquiterpene synthase involved in the biosynthesis of volatile compounds. Mediates the conversion of (2E,6E)-farnesyl diphosphate ((EE)-FPP) into (+)-thujopsene, beta-bisabolene, alpha-cederene, beta-acoradiene, (E)-gamma-bisabolene, (Z)-alpha-bisabolene, (Z)-beta-farnesene and (E)-beta-farnesene, and of (2Z,6Z)-farnesyl diphosphate ((ZZ)-FPP) into (E)-gamma-bisabolene, (E)-alpha-bisabolene, (E)-beta-farnesene, (Z)-beta-farnesene, beta-bisabolene, beta-acoradiene and alpha-acoradiene. Can act with a low efficiency as a monoterpene synthase with geranyl diphosphate (GPP) as substrate, thus producing beta-myrcene, limonene and terpinolene. The sequence is that of Sesquiterpene synthase 14b from Solanum habrochaites (Wild tomato).